Consider the following 270-residue polypeptide: NADPH-dependent aldehyde reductase-like protein, chloroplastic (270 aa).

The N-terminal 53 residues, 1 to 53 (MSTHSSISQPPLPLAGRVAIVTGSSRGIGRAIAIHLAELGARIVINYTSKAAD), are a transit peptide targeting the chloroplast. NADP(+) is bound at residue 26–50 (RGIGRAIAIHLAELGARIVINYTSK). Residue S165 coordinates substrate. The Proton acceptor role is filled by Y178.

The protein belongs to the short-chain dehydrogenases/reductases (SDR) family.

It is found in the plastid. The protein resides in the chloroplast. Aldehyde reductase that catalyzes the reduction of the aldehyde carbonyl groups on saturated and alpha,beta-unsaturated aldehydes with more than 5 carbons. In Arabidopsis thaliana (Mouse-ear cress), this protein is NADPH-dependent aldehyde reductase-like protein, chloroplastic.